The sequence spans 232 residues: Thiamine import ATP-binding protein ThiQ (232 aa).

The ABC transporter domain maps to 2–230 (LKLTDITWLY…KGSASAIWGI (229 aa)). An ATP-binding site is contributed by 32–39 (GPSGAGKS).

The protein belongs to the ABC transporter superfamily. Thiamine importer (TC 3.A.1.19.1) family. In terms of assembly, the complex is composed of two ATP-binding proteins (ThiQ), two transmembrane proteins (ThiP) and a solute-binding protein (ThiB).

The protein localises to the cell inner membrane. The enzyme catalyses thiamine(out) + ATP + H2O = thiamine(in) + ADP + phosphate + H(+). Part of the ABC transporter complex ThiBPQ involved in thiamine import. Responsible for energy coupling to the transport system. This is Thiamine import ATP-binding protein ThiQ from Shigella flexneri.